A 129-amino-acid chain; its full sequence is Large-conductance mechanosensitive channel (129 aa).

3 helical membrane passes run 8–28 (FIMR…AAFT), 30–50 (IVKS…AGAV), and 67–87 (GAVL…FLII).

Belongs to the MscL family. Homopentamer.

Its subcellular location is the cell membrane. In terms of biological role, channel that opens in response to stretch forces in the membrane lipid bilayer. May participate in the regulation of osmotic pressure changes within the cell. This is Large-conductance mechanosensitive channel from Oenococcus oeni (strain ATCC BAA-331 / PSU-1).